The chain runs to 448 residues: Tryptophan dimethylallyltransferase 1 (448 aa).

Residues 80–81 (IL) and E89 contribute to the L-tryptophan site. Substrate-binding residues include R100, K186, and Y188. L-tryptophan-binding residues include Y190 and R249. R262, K264, Y266, Q348, Y350, Y414, and Y418 together coordinate substrate.

It belongs to the tryptophan dimethylallyltransferase family. In terms of assembly, homodimer.

It carries out the reaction L-tryptophan + dimethylallyl diphosphate = 4-(3-methylbut-2-enyl)-L-tryptophan + diphosphate. It functions in the pathway alkaloid biosynthesis; ergot alkaloid biosynthesis. In terms of biological role, tryptophan dimethylallyltransferase; part of the gene cluster that mediates the biosynthesis of fungal ergot alkaloid. DmaW catalyzes the first step of ergot alkaloid biosynthesis by condensing dimethylallyl diphosphate (DMAP) and tryptophan to form 4-dimethylallyl-L-tryptophan. The second step is catalyzed by the methyltransferase easF that methylates 4-dimethylallyl-L-tryptophan in the presence of S-adenosyl-L-methionine, resulting in the formation of 4-dimethylallyl-L-abrine. The catalase easC and the FAD-dependent oxidoreductase easE then transform 4-dimethylallyl-L-abrine to chanoclavine-I which is further oxidized by easD in the presence of NAD(+), resulting in the formation of chanoclavine-I aldehyde. Agroclavine dehydrogenase easG then mediates the conversion of chanoclavine-I aldehyde to agroclavine via a non-enzymatic adduct reaction: the substrate is an iminium intermediate that is formed spontaneously from chanoclavine-I aldehyde in the presence of glutathione. The presence of easA is not required to complete this reaction. Further conversion of agroclavine to paspalic acid is a two-step process involving oxidation of agroclavine to elymoclavine and of elymoclavine to paspalic acid, the second step being performed by the elymoclavine oxidase cloA. Paspalic acid is then further converted to D-lysergic acid. Ergopeptines are assembled from D-lysergic acid and three different amino acids by the D-lysergyl-peptide-synthetases composed each of a monomudular and a trimodular nonribosomal peptide synthetase subunit. LpsB and lpsC encode the monomodular subunits responsible for D-lysergic acid activation and incorporation into the ergopeptine backbone. LpsA1 and A2 subunits encode the trimodular nonribosomal peptide synthetase assembling the tripeptide portion of ergopeptines. LpsA1 is responsible for formation of the major ergopeptine, ergotamine, and lpsA2 for alpha-ergocryptine, the minor ergopeptine of the total alkaloid mixture elaborated by C.purpurea. D-lysergyl-tripeptides are assembled by the nonribosomal peptide synthetases and released as N-(D-lysergyl-aminoacyl)-lactams. Cyclolization of the D-lysergyl-tripeptides is performed by the Fe(2+)/2-ketoglutarate-dependent dioxygenase easH which introduces a hydroxyl group into N-(D-lysergyl-aminoacyl)-lactam at alpha-C of the aminoacyl residue followed by spontaneous condensation with the terminal lactam carbonyl group. This Claviceps purpurea (strain 20.1) (Ergot fungus) protein is Tryptophan dimethylallyltransferase 1.